Here is a 186-residue protein sequence, read N- to C-terminus: Ribosome-recycling factor (186 aa).

The protein belongs to the RRF family.

Its subcellular location is the cytoplasm. Its function is as follows. Responsible for the release of ribosomes from messenger RNA at the termination of protein biosynthesis. May increase the efficiency of translation by recycling ribosomes from one round of translation to another. This Cupriavidus pinatubonensis (strain JMP 134 / LMG 1197) (Cupriavidus necator (strain JMP 134)) protein is Ribosome-recycling factor.